A 62-amino-acid polypeptide reads, in one-letter code: Dual specificity mitogen-activated protein kinase kinase 3 (62 aa).

One can recognise a Protein kinase domain in the interval 1–62; sequence GKIAVSIVKA…VAKTMDAGCK (62 aa).

The protein belongs to the protein kinase superfamily. STE Ser/Thr protein kinase family. MAP kinase kinase subfamily. Post-translationally, activated by phosphorylation on Ser/Thr catalyzed by MAP kinase kinase kinases.

It catalyses the reaction L-seryl-[protein] + ATP = O-phospho-L-seryl-[protein] + ADP + H(+). It carries out the reaction L-threonyl-[protein] + ATP = O-phospho-L-threonyl-[protein] + ADP + H(+). The enzyme catalyses L-tyrosyl-[protein] + ATP = O-phospho-L-tyrosyl-[protein] + ADP + H(+). In terms of biological role, catalyzes the concomitant phosphorylation of a threonine and a tyrosine residue in a Thr-Glu-Tyr sequence located in MAP kinases. The chain is Dual specificity mitogen-activated protein kinase kinase 3 (map2k3) from Xenopus laevis (African clawed frog).